The primary structure comprises 127 residues: Large ribosomal subunit protein bL12 (127 aa).

Belongs to the bacterial ribosomal protein bL12 family. Homodimer. Part of the ribosomal stalk of the 50S ribosomal subunit. Forms a multimeric L10(L12)X complex, where L10 forms an elongated spine to which 2 to 4 L12 dimers bind in a sequential fashion. Binds GTP-bound translation factors.

Its function is as follows. Forms part of the ribosomal stalk which helps the ribosome interact with GTP-bound translation factors. Is thus essential for accurate translation. This is Large ribosomal subunit protein bL12 from Thiobacillus denitrificans (strain ATCC 25259 / T1).